Consider the following 202-residue polypeptide: Peptide deformylase (202 aa).

The Fe cation site is built by C121 and H163. E164 is an active-site residue. H167 provides a ligand contact to Fe cation.

It belongs to the polypeptide deformylase family. Requires Fe(2+) as cofactor.

It carries out the reaction N-terminal N-formyl-L-methionyl-[peptide] + H2O = N-terminal L-methionyl-[peptide] + formate. Its function is as follows. Removes the formyl group from the N-terminal Met of newly synthesized proteins. Requires at least a dipeptide for an efficient rate of reaction. N-terminal L-methionine is a prerequisite for activity but the enzyme has broad specificity at other positions. The polypeptide is Peptide deformylase (Synechococcus sp. (strain CC9311)).